The following is an 856-amino-acid chain: Putative zinc protease C28F5.4 (856 aa).

H71 is a binding site for Zn(2+). E74 acts as the Proton acceptor in catalysis. The Zn(2+) site is built by H75 and E152.

It belongs to the peptidase M16 family.

This chain is Putative zinc protease C28F5.4, found in Caenorhabditis elegans.